The sequence spans 378 residues: Acetylornithine deacetylase (378 aa).

Residue His-76 participates in Zn(2+) binding. Residue Asp-78 is part of the active site. Residue Asp-108 participates in Zn(2+) binding. Residue Glu-140 is part of the active site. Residues Glu-141, Glu-165, and His-351 each contribute to the Zn(2+) site.

This sequence belongs to the peptidase M20A family. ArgE subfamily. Homodimer. Requires Zn(2+) as cofactor. Co(2+) serves as cofactor. Glutathione is required as a cofactor.

The protein resides in the cytoplasm. It catalyses the reaction N(2)-acetyl-L-ornithine + H2O = L-ornithine + acetate. It functions in the pathway amino-acid biosynthesis; L-arginine biosynthesis; L-ornithine from N(2)-acetyl-L-ornithine (linear): step 1/1. Functionally, catalyzes the hydrolysis of the amide bond of N(2)-acetylated L-amino acids. Cleaves the acetyl group from N-acetyl-L-ornithine to form L-ornithine, an intermediate in L-arginine biosynthesis pathway, and a branchpoint in the synthesis of polyamines. This is Acetylornithine deacetylase from Aliivibrio salmonicida (strain LFI1238) (Vibrio salmonicida (strain LFI1238)).